The chain runs to 651 residues: 120 kDa Glycoprotein O (651 aa).

Positions 1–56 (MHLEVIVQSYKKSKYYFSHTFYLYKFIVVNSPDMLHISRLGLFLGLFAIVMHSVNL) are cleaved as a signal peptide. Asn-74, Asn-97, Asn-147, Asn-208, Asn-223, Asn-234, and Asn-254 each carry an N-linked (GlcNAc...) asparagine; by host glycan. Over residues 275–292 (SSTSASLTSPHIPSTNIP) the composition is skewed to low complexity. The segment at 275–303 (SSTSASLTSPHIPSTNIPTPAPPPVTKNS) is disordered. Residues Asn-302, Asn-355, Asn-378, Asn-395, Asn-469, Asn-502, Asn-520, Asn-546, Asn-603, Asn-620, and Asn-631 are each glycosylated (N-linked (GlcNAc...) asparagine; by host).

Belongs to the herpesviridae U47 family. In terms of assembly, part of a gH-gL-gO complex. In terms of processing, a shorter mature protein, gO-80K, is produced probably by proteolytic cleavage. Modified with high mannose-oligosaccharides. Post-translationally, N-glycosylated with complex glycans.

The protein resides in the virion. It localises to the host cell membrane. The protein is 120 kDa Glycoprotein O (U47) of Human herpesvirus 6A (strain Uganda-1102) (HHV-6 variant A).